We begin with the raw amino-acid sequence, 616 residues long: Chaperone protein HscA (616 aa).

It belongs to the heat shock protein 70 family.

Chaperone involved in the maturation of iron-sulfur cluster-containing proteins. Has a low intrinsic ATPase activity which is markedly stimulated by HscB. Involved in the maturation of IscU. This chain is Chaperone protein HscA, found in Klebsiella pneumoniae subsp. pneumoniae (strain ATCC 700721 / MGH 78578).